The primary structure comprises 393 residues: Dual specificity mitogen-activated protein kinase kinase 1 (393 aa).

The interval 1–27 (MPKKKPTPIQLNPAPDGSAVNGTSSAE) is disordered. One can recognise a Protein kinase domain in the interval 68-361 (FEKISELGAG…LKQLMVHAFI (294 aa)). Residues 74–82 (LGAGNGGVV) and Lys97 contribute to the ATP site. Catalysis depends on Asp190, which acts as the Proton acceptor. Residues Ser218 and Ser222 each carry the phosphoserine; by RAF modification. The tract at residues 270 to 307 (ELELLFGCQVEGDAAETPPRPRTPGRPLSSYGMDSRPP) is RAF1-binding. Residue Thr286 is modified to Phosphothreonine. Position 292 is a phosphothreonine; by MAPK1 (Thr292). Ser298 is subject to Phosphoserine; by PAK.

It belongs to the protein kinase superfamily. STE Ser/Thr protein kinase family. MAP kinase kinase subfamily. As to quaternary structure, found in a complex with at least BRAF, HRAS, MAP2K1, MAPK3/ERK1 and RGS14. Forms a heterodimer with MAP2K2/MEK2. Forms heterodimers with KSR2 which further dimerize to form tetramers. Interacts with KSR1 or KSR2 and BRAF; the interaction with KSR1 or KSR2 mediates KSR1-BRAF or KSR2-BRAF dimerization. Interacts with ARBB2, LAMTOR3, MAPK1/ERK2 and RAF1. Interacts with MAPK1/ERK2. Interacts with MORG1. Interacts with PPARG. Interacts with VRK2. Interacts with SGK1. Interacts with BIRC6/bruce. Interacts with KAT7; the interaction promotes KAT7 phosphorylation. Interacts with RAF1 and NEK10; the interaction is required for ERK1/2-signaling pathway activation in response to UV irradiation. Interacts with TRAF3IP3. Interacts with MOS. Post-translationally, phosphorylation at Ser-218 and Ser-222 by MAP kinase kinase kinases (BRAF or MEKK1) positively regulates kinase activity. Also phosphorylated at Thr-292 by MAPK1/ERK2 and at Ser-298 by PAK. MAPK1/ERK2 phosphorylation of Thr-292 occurs in response to cellular adhesion and leads to inhibition of Ser-298 phosphorylation by PAK. Autophosphorylated at Ser-218 and Ser-222, autophosphosphorylation is promoted by NEK10 following UV irradiation.

The protein resides in the cytoplasm. Its subcellular location is the cytoskeleton. The protein localises to the microtubule organizing center. It localises to the centrosome. It is found in the spindle pole body. The protein resides in the nucleus. Its subcellular location is the membrane. The catalysed reaction is L-seryl-[protein] + ATP = O-phospho-L-seryl-[protein] + ADP + H(+). It carries out the reaction L-threonyl-[protein] + ATP = O-phospho-L-threonyl-[protein] + ADP + H(+). It catalyses the reaction L-tyrosyl-[protein] + ATP = O-phospho-L-tyrosyl-[protein] + ADP + H(+). With respect to regulation, ras proteins such as HRAS mediate the activation of RAF proteins such as RAF1 or BRAF which in turn activate extracellular signal-regulated kinases (ERK) through MAPK (mitogen-activated protein kinases) and ERK kinases MAP2K1/MEK1 and MAP2K2/MEK2. Activation occurs through phosphorylation of Ser-218 and Ser-222. MAP2K1/MEK1 binds KSR1 or KSR2 releasing the inhibitory intramolecular interaction between KSR1 or KSR2 protein kinase and N-terminal domains. This allows KSR1 or KSR2 dimerization with BRAF leading to BRAF activation and phosphorylation of MAP2K1. MAP2K1/MEK1 is also the target of negative feed-back regulation by its substrate kinases, such as MAPK1/ERK2. These phosphorylate MAP2K1/MEK1 on Thr-292, thereby facilitating dephosphorylation of the activating residues Ser-218 and Ser-222. Inhibited by serine/threonine phosphatase 2A. Functionally, dual specificity protein kinase which acts as an essential component of the MAP kinase signal transduction pathway. Binding of extracellular ligands such as growth factors, cytokines and hormones to their cell-surface receptors activates RAS and this initiates RAF1 activation. RAF1 then further activates the dual-specificity protein kinases MAP2K1/MEK1 and MAP2K2/MEK2. Both MAP2K1/MEK1 and MAP2K2/MEK2 function specifically in the MAPK/ERK cascade, and catalyze the concomitant phosphorylation of a threonine and a tyrosine residue in a Thr-Glu-Tyr sequence located in the extracellular signal-regulated kinases MAPK3/ERK1 and MAPK1/ERK2, leading to their activation and further transduction of the signal within the MAPK/ERK cascade. Activates BRAF in a KSR1 or KSR2-dependent manner; by binding to KSR1 or KSR2 releases the inhibitory intramolecular interaction between KSR1 or KSR2 protein kinase and N-terminal domains which promotes KSR1 or KSR2-BRAF dimerization and BRAF activation. Depending on the cellular context, this pathway mediates diverse biological functions such as cell growth, adhesion, survival and differentiation, predominantly through the regulation of transcription, metabolism and cytoskeletal rearrangements. One target of the MAPK/ERK cascade is peroxisome proliferator-activated receptor gamma (PPARG), a nuclear receptor that promotes differentiation and apoptosis. MAP2K1/MEK1 has been shown to export PPARG from the nucleus. The MAPK/ERK cascade is also involved in the regulation of endosomal dynamics, including lysosome processing and endosome cycling through the perinuclear recycling compartment (PNRC), as well as in the fragmentation of the Golgi apparatus during mitosis. The sequence is that of Dual specificity mitogen-activated protein kinase kinase 1 from Rattus norvegicus (Rat).